Consider the following 173-residue polypeptide: Large ribosomal subunit protein uL10 (173 aa).

The protein belongs to the universal ribosomal protein uL10 family. Part of the ribosomal stalk of the 50S ribosomal subunit. The N-terminus interacts with L11 and the large rRNA to form the base of the stalk. The C-terminus forms an elongated spine to which L12 dimers bind in a sequential fashion forming a multimeric L10(L12)X complex.

In terms of biological role, forms part of the ribosomal stalk, playing a central role in the interaction of the ribosome with GTP-bound translation factors. This is Large ribosomal subunit protein uL10 from Desulfatibacillum aliphaticivorans.